The chain runs to 247 residues: Granzyme B (247 aa).

A signal peptide spans 1–18 (MQPILLLLAFLLLPRADA). A propeptide spans 19 to 20 (GE) (activation peptide). The 225-residue stretch at 21 to 245 (IIGGHEAKPH…FVHWIKKTMK (225 aa)) folds into the Peptidase S1 domain. A disulfide bridge links C49 with C65. Catalysis depends on H64, which acts as the Charge relay system. N-linked (GlcNAc...) asparagine glycosylation is found at N71 and N104. Residue D108 is the Charge relay system of the active site. Cystine bridges form between C142-C209 and C173-C188. S203 acts as the Charge relay system in catalysis.

It belongs to the peptidase S1 family. Granzyme subfamily.

It localises to the secreted. The protein resides in the cytolytic granule. It catalyses the reaction Preferential cleavage: -Asp-|-Xaa- &gt;&gt; -Asn-|-Xaa- &gt; -Met-|-Xaa-, -Ser-|-Xaa-.. Its activity is regulated as follows. Inactivated by the serine protease inhibitor diisopropylfluorophosphate. Abundant protease in the cytosolic granules of cytotoxic T-cells and NK-cells which activates caspase-independent pyroptosis when delivered into the target cell through the immunological synapse. It cleaves after Asp. Once delivered into the target cell, acts by catalyzing cleavage of gasdermin-E (GSDME), releasing the pore-forming moiety of GSDME, thereby triggering pyroptosis and target cell death. Seems to be linked to an activation cascade of caspases (aspartate-specific cysteine proteases) responsible for apoptosis execution. Cleaves caspase-3, -9 and -10 (CASP3, CASP9 and CASP10, respectively) to give rise to active enzymes mediating apoptosis. Cleaves and activates CASP7 in response to bacterial infection, promoting plasma membrane repair. The sequence is that of Granzyme B from Homo sapiens (Human).